Consider the following 1692-residue polypeptide: Flagellar attachment zone protein 1 (1692 aa).

Coiled-coil stretches lie at residues 613–657 (REQE…KLQK), 684–864 (VTLD…HKVR), and 903–1607 (NDHM…SALE). 37 consecutive repeat copies span residues 1012 to 1025 (EELE…EKLA), 1026 to 1039 (EELE…EKLA), 1040 to 1053 (EELE…EKLA), 1054 to 1067 (EELE…EKLA), 1068 to 1081 (EELE…EKLA), 1082 to 1095 (EELE…EKLA), 1096 to 1109 (EELE…EKLA), 1110 to 1123 (EELE…EKLA), 1124 to 1137 (EELE…EKLA), 1138 to 1151 (EELE…EKLA), 1152 to 1165 (EELE…EKLA), 1166 to 1179 (EELE…EKLA), 1180 to 1193 (EELE…EKLA), 1194 to 1207 (EELE…EKLA), 1208 to 1221 (EELE…EKLA), 1222 to 1235 (EELE…EKLA), 1236 to 1249 (EELE…EKLA), 1250 to 1263 (EELE…EKLA), 1264 to 1277 (EELE…EKLA), 1278 to 1291 (EELE…EKLA), 1292 to 1305 (EELE…EKLA), 1306 to 1319 (EELE…EKLA), 1320 to 1333 (EELE…EKLA), 1334 to 1347 (EELE…EKLA), 1348 to 1361 (EELE…EKLA), 1362 to 1375 (EELE…EKLA), 1376 to 1389 (EELE…EKLA), 1390 to 1403 (EELE…EKLA), 1404 to 1417 (EELE…EKLA), 1418 to 1431 (EELE…EKLA), 1432 to 1445 (EELE…EKLA), 1446 to 1459 (EELE…EKLA), 1460 to 1473 (EELE…EKLA), 1474 to 1487 (EELE…EKLA), 1488 to 1501 (EELE…EKLA), 1502 to 1515 (EELE…EKLA), and 1516 to 1529 (EELE…KRLA). Positions 1012-1529 (EELELKAAEN…LKVAENKRLA (518 aa)) are 37 X 14 AA tandem repeats of E-E-L-E-L-K-[VA]-A-E-N-E-K-L-A.

The protein localises to the cell projection. It is found in the cilium. It localises to the flagellum. In terms of biological role, a component of FAZ filament that is required for correct FAZ assembly and attachment. Not essential for new flagellum growth. In Trypanosoma brucei brucei (strain 927/4 GUTat10.1), this protein is Flagellar attachment zone protein 1.